Reading from the N-terminus, the 121-residue chain is Large ribosomal subunit protein bL20 (121 aa).

The protein belongs to the bacterial ribosomal protein bL20 family.

Functionally, binds directly to 23S ribosomal RNA and is necessary for the in vitro assembly process of the 50S ribosomal subunit. It is not involved in the protein synthesizing functions of that subunit. The chain is Large ribosomal subunit protein bL20 from Ruegeria sp. (strain TM1040) (Silicibacter sp.).